Consider the following 589-residue polypeptide: Arylsulfatase L (589 aa).

The N-terminal stretch at Met-1–Ser-31 is a signal peptide. Residues Asp-46 and Asp-47 each contribute to the Ca(2+) site. N-linked (GlcNAc...) asparagine glycosylation occurs at Asn-58. Cys-86 is a binding site for Ca(2+). Residue Cys-86 is the Nucleophile of the active site. Cys-86 is subject to 3-oxoalanine (Cys). Residue Asn-125 is glycosylated (N-linked (GlcNAc...) asparagine). Lys-145 provides a ligand contact to substrate. His-147 is a catalytic residue. Residue Asn-258 is glycosylated (N-linked (GlcNAc...) asparagine). Position 301 (His-301) interacts with substrate. N-linked (GlcNAc...) asparagine glycosylation occurs at Asn-344. Ca(2+) is bound by residues Asp-353 and His-354. Lys-378 is a substrate binding site.

The protein belongs to the sulfatase family. The cofactor is Ca(2+). Post-translationally, N-glycosylated. The conversion to 3-oxoalanine (also known as C-formylglycine, FGly), of a serine or cysteine residue in prokaryotes and of a cysteine residue in eukaryotes, is critical for catalytic activity. Expressed in the pancreas, liver and kidney.

Its subcellular location is the golgi apparatus. It localises to the golgi stack. The catalysed reaction is an aryl sulfate + H2O = a phenol + sulfate + H(+). Its activity is regulated as follows. Inhibited by millimolar concentrations of warfarin. In terms of biological role, exhibits arylsulfatase activity towards the artificial substrate 4-methylumbelliferyl sulfate. May be essential for the correct composition of cartilage and bone matrix during development. Has no activity toward steroid sulfates. The protein is Arylsulfatase L of Homo sapiens (Human).